The primary structure comprises 596 residues: Aspartate--tRNA(Asp/Asn) ligase (596 aa).

Glu172 contributes to the L-aspartate binding site. Positions 196–199 (QLFK) are aspartate. Arg218 provides a ligand contact to L-aspartate. Residues 218–220 (RDE) and Gln227 contribute to the ATP site. His450 contacts L-aspartate. ATP is bound at residue Glu484. L-aspartate is bound at residue Arg491. An ATP-binding site is contributed by 536–539 (GLDR).

This sequence belongs to the class-II aminoacyl-tRNA synthetase family. Type 1 subfamily. Homodimer.

Its subcellular location is the cytoplasm. It carries out the reaction tRNA(Asx) + L-aspartate + ATP = L-aspartyl-tRNA(Asx) + AMP + diphosphate. Functionally, aspartyl-tRNA synthetase with relaxed tRNA specificity since it is able to aspartylate not only its cognate tRNA(Asp) but also tRNA(Asn). Reaction proceeds in two steps: L-aspartate is first activated by ATP to form Asp-AMP and then transferred to the acceptor end of tRNA(Asp/Asn). This Acidithiobacillus ferrooxidans (strain ATCC 23270 / DSM 14882 / CIP 104768 / NCIMB 8455) (Ferrobacillus ferrooxidans (strain ATCC 23270)) protein is Aspartate--tRNA(Asp/Asn) ligase.